The chain runs to 182 residues: CDP-diacylglycerol--glycerol-3-phosphate 3-phosphatidyltransferase (182 aa).

At 1–12 the chain is on the cytoplasmic side; the sequence is MQLNIPTWLTLF. The chain crosses the membrane as a helical span at residues 13–37; it reads RVVMIPFFVLAFYLPFKWAPLCCAL. Residues 38-60 lie on the Periplasmic side of the membrane; sequence IFVLAAVTDWFDGFLARRWKQTT. A helical membrane pass occupies residues 61–81; the sequence is RFGAFLDPVADKVMVAMALVL. Topologically, residues 82-86 are cytoplasmic; that stretch reads VAEHF. The helical transmembrane segment at 87 to 107 threads the bilayer; sequence HSWWITLPAATMIAREIIISA. Residues 108–145 are Periplasmic-facing; it reads LREWMAEIGKRSSVAVSWIGKVKTTAQMLALVTLLWRP. Residues 146-168 traverse the membrane as a helical segment; the sequence is DDIVSGIGIAALYVAAVLTFWSM. Residues 169–181 lie on the Cytoplasmic side of the membrane; it reads FQYLYAARHDLFE.

It belongs to the CDP-alcohol phosphatidyltransferase class-I family.

It localises to the cell inner membrane. The catalysed reaction is a CDP-1,2-diacyl-sn-glycerol + sn-glycerol 3-phosphate = a 1,2-diacyl-sn-glycero-3-phospho-(1'-sn-glycero-3'-phosphate) + CMP + H(+). It participates in phospholipid metabolism; phosphatidylglycerol biosynthesis; phosphatidylglycerol from CDP-diacylglycerol: step 1/2. Catalyzes the conversion of cytidine diphosphate diacylglycerol (CDP-DG) and glycerol 3-phosphate into phosphatidylglycerol. Essential for the synthesis of anionic phospholipids, thereby playing a role in balancing the ratio of zwitterionic and anionic phospholipids, which is thought to be important for normal membrane function. The polypeptide is CDP-diacylglycerol--glycerol-3-phosphate 3-phosphatidyltransferase (Sodalis glossinidius (strain morsitans)).